The sequence spans 63 residues: Large ribosomal subunit protein uL29 (63 aa).

Belongs to the universal ribosomal protein uL29 family.

This Shigella dysenteriae serotype 1 (strain Sd197) protein is Large ribosomal subunit protein uL29.